A 577-amino-acid chain; its full sequence is Arginine--tRNA ligase (577 aa).

The short motif at 132 to 142 is the 'HIGH' region element; it reads ANPTGPLHVGH.

The protein belongs to the class-I aminoacyl-tRNA synthetase family. Monomer.

It is found in the cytoplasm. It carries out the reaction tRNA(Arg) + L-arginine + ATP = L-arginyl-tRNA(Arg) + AMP + diphosphate. In Herminiimonas arsenicoxydans, this protein is Arginine--tRNA ligase.